A 190-amino-acid chain; its full sequence is Threonylcarbamoyl-AMP synthase (190 aa).

The 184-residue stretch at 7–190 (GDAIAAAIDV…ALTGELFRQG (184 aa)) folds into the YrdC-like domain.

The protein belongs to the SUA5 family. TsaC subfamily.

Its subcellular location is the cytoplasm. It carries out the reaction L-threonine + hydrogencarbonate + ATP = L-threonylcarbamoyladenylate + diphosphate + H2O. In terms of biological role, required for the formation of a threonylcarbamoyl group on adenosine at position 37 (t(6)A37) in tRNAs that read codons beginning with adenine. Catalyzes the conversion of L-threonine, HCO(3)(-)/CO(2) and ATP to give threonylcarbamoyl-AMP (TC-AMP) as the acyladenylate intermediate, with the release of diphosphate. This is Threonylcarbamoyl-AMP synthase from Shigella boydii serotype 4 (strain Sb227).